The chain runs to 570 residues: DNA polymerase/3'-5' exonuclease PolX (570 aa).

The segment at 1 to 315 is DNA polymerase type-X; sequence MHKKDIIRLL…PLIPPEIRES (315 aa). A divalent metal cation contacts are provided by aspartate 193, aspartate 195, and aspartate 240. The tract at residues 333 to 570 is 3'-5' exonuclease; it reads QIKGDLHMHS…DVEAFLKRND (238 aa). Histidine 339, histidine 341, histidine 371, glutamate 410, histidine 437, histidine 465, aspartate 526, and histidine 528 together coordinate Mn(2+).

In the N-terminal section; belongs to the DNA polymerase type-X family. It in the C-terminal section; belongs to the PHP family. Monomer. Requires Mn(2+) as cofactor. It depends on Mg(2+) as a cofactor.

It carries out the reaction DNA(n) + a 2'-deoxyribonucleoside 5'-triphosphate = DNA(n+1) + diphosphate. It catalyses the reaction Exonucleolytic cleavage in the 3'- to 5'-direction to yield nucleoside 5'-phosphates.. With respect to regulation, the polymerization activity is inhibited in the presence of 2'-3'-dideoxynucleoside 5'-triphosphate (ddNTP). Its function is as follows. Strictly DNA-template-directed DNA polymerase, preferentially acting on DNA structures containing gaps from one to a few nucleotides and bearing a phosphate group at the 5' end of the downstream DNA. The fact that PolX is able to conduct filling of a single-nucleotide gap, allowing further sealing of the resulting nick by a DNA ligase, points to a putative role in base excision repair (BER) during the B.subtilis life cycle. Moreover, also possesses a 3'-5' exonuclease activity able to edit unpaired 3'-termini in a gapped DNA substrate and likely involved in resecting unannealed 3'-termini during DNA repair. The same PolX molecule could perform the subsequent gap-filling step. Does not display 5'-deoxyribose 5'-phosphate (dRP) lyase activity, as predicted by the lack of the lysine and tyrosine residues responsible for the dRP lyase activity in some other PolX members. This is DNA polymerase/3'-5' exonuclease PolX (polX) from Bacillus subtilis (strain 168).